The primary structure comprises 185 residues: Elongation factor P (185 aa).

The protein belongs to the elongation factor P family.

It is found in the cytoplasm. It functions in the pathway protein biosynthesis; polypeptide chain elongation. Its function is as follows. Involved in peptide bond synthesis. Stimulates efficient translation and peptide-bond synthesis on native or reconstituted 70S ribosomes in vitro. Probably functions indirectly by altering the affinity of the ribosome for aminoacyl-tRNA, thus increasing their reactivity as acceptors for peptidyl transferase. The polypeptide is Elongation factor P (Salinispora tropica (strain ATCC BAA-916 / DSM 44818 / JCM 13857 / NBRC 105044 / CNB-440)).